Consider the following 719-residue polypeptide: Exonuclease mut-7 homolog (719 aa).

Residues 1–22 (MSKSNNVAPPCRQDQLGFVPAG) form a disordered region. The 55-residue stretch at 575-629 (NLANLVRLCLGKKLDKSNQFSNWAQRPLRKEQLRYAALDAFCLLEIYDAIEKQLT) folds into the 3'-5' exonuclease domain. The disordered stretch occupies residues 644-719 (NDVRPPSDSG…FEGPNTKSVL (76 aa)). Residues 667 to 678 (RRNHRDKYNKRH) show a composition bias toward basic residues. 2 stretches are compositionally biased toward polar residues: residues 683-692 (DSNSGNSSRA) and 706-719 (EQQT…KSVL).

This sequence belongs to the mut-7 family. Requires Mg(2+) as cofactor.

Possesses 3'-5' exoribonuclease activity. Required for 3'-end trimming of AGO1-bound miRNAs. The polypeptide is Exonuclease mut-7 homolog (Aedes aegypti (Yellowfever mosquito)).